Reading from the N-terminus, the 737-residue chain is MDGSELVEPTTKCPLKHGVRFHTSFGGRSNRDWWPNQLNLKILHQHAPASNPMPAGFSYAEQVETLDVEALKRDLAALMTDSQDWWPADYGHYGPLFVRMAWHSAGTYRTGDGRGGAGGGQQRFAPLNSWPDNGNLDKARRLIWPIKQKYGARISWADLMILAADVGMETMGFKTFGFGFGREDTWEPEEDVHWGAEDTWLGDARYTGERELDKPLGAVQMGLIYVNPEGPNGKPDPLAAAHDIRETFARMAMNDEETVALIAGGHTFGKAHGAGDAAHVGVEPEAAGIALQGLGWKNSFGSGVGSDAITSGLEGPWTPNPIKWDNGFFDTLFGHEWELTKSPAGAFQWTPKDPEAGPKAPDAHDPSRQVAPMMLTTDLALRLDPNYGPISKRFHENPDQFQDAFARAWFKLTHRDMGPKARYLGPLVPQEELLWQDPLPEPQGPPIDANDIRELKAKVLATGLSVPQLVATAWASASTFRGSDKRGGANGARIRLSPQKDWAVNQPAQLANVLATLEGVQSAFNGGQTDGKTVSLADLIVLAGCAAVEQAAKAAGHDVEVPFTPGRVDASQNQTDVASFGVLEPKADGFRNYLNTDLPLTAEELLVDKAQLLTLSAPEMTVLVGGLRALNANTDQSSHGVFTTRPGSLTNDFFVNLLDMRTVWTATSEDEAQFEGRDRTTGDLKWTATRVDLIFGSNSQLRALAEVFAQSDSQGAFVGAFVAAWTKVMNLDRFDLA.

Positions 102-225 form a cross-link, tryptophyl-tyrosyl-methioninium (Trp-Tyr) (with M-251); that stretch reads WHSAGTYRTG…LGAVQMGLIY (124 aa). His103 functions as the Proton acceptor in the catalytic mechanism. Residues 225-251 constitute a cross-link (tryptophyl-tyrosyl-methioninium (Tyr-Met) (with W-102)); sequence YVNPEGPNGKPDPLAAAHDIRETFARM. Residue His266 coordinates heme b.

The protein belongs to the peroxidase family. Peroxidase/catalase subfamily. As to quaternary structure, homodimer or homotetramer. Heme b is required as a cofactor. Post-translationally, formation of the three residue Trp-Tyr-Met cross-link is important for the catalase, but not the peroxidase activity of the enzyme.

The enzyme catalyses H2O2 + AH2 = A + 2 H2O. The catalysed reaction is 2 H2O2 = O2 + 2 H2O. Bifunctional enzyme with both catalase and broad-spectrum peroxidase activity. The protein is Catalase-peroxidase of Caulobacter sp. (strain K31).